Consider the following 159-residue polypeptide: G-protein-signaling modulator 3 (159 aa).

The interval 1–54 (MEAERPQEEDGEQSLPQDDQGWPPVNATARPWRSAPPSPPPPGTRHTALGPRSG) is disordered. Serine 34, serine 38, serine 55, and serine 58 each carry phosphoserine. The span at 34 to 43 (SAPPSPPPPG) shows a compositional bias: pro residues. Position 61 is a phosphothreonine (threonine 61). One can recognise a GoLoco 1 domain in the interval 61 to 83 (TELLLDLVAEAQSRRLEEQRATF). Residues 77–97 (EEQRATFHTPEAPPNLAPAPP) form a disordered region. Positions 87–97 (EAPPNLAPAPP) are enriched in pro residues. GoLoco domains lie at 103 to 125 (KEQL…RSDP) and 131 to 154 (GQEL…RSRP).

It localises to the cytoplasm. Functionally, interacts with subunit of G(i) alpha proteins and regulates the activation of G(i) alpha proteins. This Mus musculus (Mouse) protein is G-protein-signaling modulator 3 (Gpsm3).